The following is a 188-amino-acid chain: Putative manganese efflux pump MntP (188 aa).

6 helical membrane passes run Leu-3–Ala-23, Ile-35–Val-55, Trp-70–Gly-90, Trp-104–Phe-126, Met-140–Phe-160, and Ala-167–Ile-187.

Belongs to the MntP (TC 9.B.29) family.

Its subcellular location is the cell inner membrane. Probably functions as a manganese efflux pump. The protein is Putative manganese efflux pump MntP of Neisseria meningitidis serogroup C / serotype 2a (strain ATCC 700532 / DSM 15464 / FAM18).